Reading from the N-terminus, the 1794-residue chain is Non-reducing polyketide synthase nscA (1794 aa).

An N-terminal acylcarrier protein transacylase domain (SAT) region spans residues aspartate 19–histidine 256. A Ketosynthase family 3 (KS3) domain is found at alanine 389–aspartate 822. A compositionally biased stretch (basic and acidic residues) spans aspartate 428–glycine 440. Positions aspartate 428 to threonine 448 are disordered. Residues cysteine 562, histidine 697, and histidine 740 each act as for beta-ketoacyl synthase activity in the active site. Positions threonine 927 to glutamate 1230 are malonyl-CoA:ACP transacylase (MAT) domain. A product template (PT) domain region spans residues threonine 1314–proline 1633. The segment at histidine 1318–alanine 1454 is N-terminal hotdog fold. One can recognise a PKS/mFAS DH domain in the interval histidine 1318–aspartate 1628. Catalysis depends on histidine 1350, which acts as the Proton acceptor; for dehydratase activity. Residues alanine 1482–aspartate 1628 form a C-terminal hotdog fold region. The active-site Proton donor; for dehydratase activity is aspartate 1539. Residues serine 1637 to aspartate 1719 form a disordered region. The span at glutamine 1644–lysine 1655 shows a compositional bias: polar residues. A Carrier domain is found at serine 1717–cysteine 1794. Position 1754 is an O-(pantetheine 4'-phosphoryl)serine (serine 1754).

Requires pantetheine 4'-phosphate as cofactor.

The protein operates within secondary metabolite biosynthesis. In terms of biological role, non-reducing polyketide synthase; part of the gene cluster that mediates the biosynthesis of neosartoricin, a prenylated anthracenone that exhibits T-cell antiproliferative activity, suggestive of a physiological role as an immunosuppressive agent. The non-reducing polyketide synthase nscA probably synthesizes and cyclizes the decaketide backbone. The hydrolase nscB then mediates the product release through hydrolysis followed by spontaneous decarboxylation. The prenyltransferase nscD catalyzes the addition of the dimethylallyl group to the aromatic C5. The FAD-dependent monooxygenase nscC is then responsible for the stereospecific hydroxylation at C2. There is no gene encoding O-acetyltransferase in the nsc gene cluster; thus, the last step of 2-O-acetylation leading to neosartoricin may be catalyzed by an unidentified O-acetyltransferase. The protein is Non-reducing polyketide synthase nscA of Aspergillus fumigatus (strain ATCC MYA-4609 / CBS 101355 / FGSC A1100 / Af293) (Neosartorya fumigata).